The following is a 616-amino-acid chain: tRNA uridine 5-carboxymethylaminomethyl modification enzyme MnmG (616 aa).

Residues 10 to 15 (GAGHAG), Val-122, and Ser-177 each bind FAD. 271 to 285 (GPRYCPSIEDKVVRF) serves as a coordination point for NAD(+). Gln-368 is a binding site for FAD.

It belongs to the MnmG family. As to quaternary structure, homodimer. Heterotetramer of two MnmE and two MnmG subunits. FAD is required as a cofactor.

It is found in the cytoplasm. Its function is as follows. NAD-binding protein involved in the addition of a carboxymethylaminomethyl (cmnm) group at the wobble position (U34) of certain tRNAs, forming tRNA-cmnm(5)s(2)U34. This Malacoplasma penetrans (strain HF-2) (Mycoplasma penetrans) protein is tRNA uridine 5-carboxymethylaminomethyl modification enzyme MnmG.